The primary structure comprises 132 residues: MSRKRTSPNRNVQIADQIQRDLSELIMREVKDPRIGIVTIQSVELTPDYAHAKVYFTALTGDPEKTQEALNHASGHLHNLLFKRLHIHTVPTLHFHYDQTIEKAVEMSRLIKEANSTRAKDDDEADTPAKDD.

The disordered stretch occupies residues 113-132 (EANSTRAKDDDEADTPAKDD).

The protein belongs to the RbfA family. In terms of assembly, monomer. Binds 30S ribosomal subunits, but not 50S ribosomal subunits or 70S ribosomes.

The protein localises to the cytoplasm. Its function is as follows. One of several proteins that assist in the late maturation steps of the functional core of the 30S ribosomal subunit. Associates with free 30S ribosomal subunits (but not with 30S subunits that are part of 70S ribosomes or polysomes). Required for efficient processing of 16S rRNA. May interact with the 5'-terminal helix region of 16S rRNA. In Burkholderia cenocepacia (strain HI2424), this protein is Ribosome-binding factor A.